We begin with the raw amino-acid sequence, 366 residues long: Histidinol-phosphate aminotransferase 2 (366 aa).

A disordered region spans residues 1-21 (MQVKDQLSLLQPYKPGKSPEQ). K222 bears the N6-(pyridoxal phosphate)lysine mark.

This sequence belongs to the class-II pyridoxal-phosphate-dependent aminotransferase family. Histidinol-phosphate aminotransferase subfamily. Homodimer. The cofactor is pyridoxal 5'-phosphate.

The enzyme catalyses L-histidinol phosphate + 2-oxoglutarate = 3-(imidazol-4-yl)-2-oxopropyl phosphate + L-glutamate. Its pathway is amino-acid biosynthesis; L-histidine biosynthesis; L-histidine from 5-phospho-alpha-D-ribose 1-diphosphate: step 7/9. This Bacillus cereus (strain ZK / E33L) protein is Histidinol-phosphate aminotransferase 2.